The primary structure comprises 155 residues: Small ribosomal subunit protein uS7c (155 aa).

It belongs to the universal ribosomal protein uS7 family. Part of the 30S ribosomal subunit.

The protein resides in the plastid. The protein localises to the chloroplast. Its function is as follows. One of the primary rRNA binding proteins, it binds directly to 16S rRNA where it nucleates assembly of the head domain of the 30S subunit. The sequence is that of Small ribosomal subunit protein uS7c (rps7) from Silene latifolia (White campion).